We begin with the raw amino-acid sequence, 608 residues long: Thiol:disulfide interchange protein DsbD (608 aa).

The N-terminal stretch at Met1–Ala22 is a signal peptide. Cys135 and Cys141 are oxidised to a cystine. The segment covering Ser161–Glu173 has biased composition (polar residues). A disordered region spans residues Ser161–Glu180. 8 consecutive transmembrane segments (helical) span residues Leu194 to Phe214, Phe241 to Ala261, Ile273 to Phe293, Gly314 to Cys334, Val352 to Ile372, Trp387 to Leu407, Val414 to Ala434, and Ser456 to Pro476. The cysteines at positions 212 and 334 are disulfide-linked. The Thioredoxin domain occupies Leu469–Lys608. A disulfide bridge connects residues Cys522 and Cys525.

The protein belongs to the thioredoxin family. DsbD subfamily.

It is found in the cell inner membrane. It carries out the reaction [protein]-dithiol + NAD(+) = [protein]-disulfide + NADH + H(+). The catalysed reaction is [protein]-dithiol + NADP(+) = [protein]-disulfide + NADPH + H(+). Functionally, required to facilitate the formation of correct disulfide bonds in some periplasmic proteins and for the assembly of the periplasmic c-type cytochromes. Acts by transferring electrons from cytoplasmic thioredoxin to the periplasm. This transfer involves a cascade of disulfide bond formation and reduction steps. The chain is Thiol:disulfide interchange protein DsbD from Colwellia psychrerythraea (strain 34H / ATCC BAA-681) (Vibrio psychroerythus).